Consider the following 189-residue polypeptide: Interferon alpha-1 (189 aa).

Residues 1–23 form the signal peptide; sequence MAPTSAFLTALVLLSCNAICSLG. Intrachain disulfides connect C24–C122 and C52–C162.

Belongs to the alpha/beta interferon family. As to quaternary structure, interacts with CR2.

Its subcellular location is the secreted. Produced by macrophages, IFN-alpha have antiviral activities. Interferon stimulates the production of two enzymes: a protein kinase and an oligoadenylate synthetase. This chain is Interferon alpha-1, found in Sus scrofa (Pig).